A 90-amino-acid polypeptide reads, in one-letter code: UPF0237 protein MMP0657 (90 aa).

An ACT domain is found at 5–79; that stretch reads VITVVGVDKP…SEIGVKINVQ (75 aa).

The protein belongs to the UPF0237 family.

This Methanococcus maripaludis (strain DSM 14266 / JCM 13030 / NBRC 101832 / S2 / LL) protein is UPF0237 protein MMP0657.